We begin with the raw amino-acid sequence, 1012 residues long: Structural polyprotein (1012 aa).

Asp-30 contacts a divalent metal cation. The region spanning 514–755 (ADKGYEVVAN…AGRQFHLALA (242 aa)) is the Peptidase S50 domain. Ser-653 functions as the Nucleophile in the catalytic mechanism. Residue Lys-692 is part of the active site. Positions 972–1012 (MKHRNPRRAPPKPKPKPNAPSQRPPGRLGRWIRTVSDEDLE) are disordered. Basic residues predominate over residues 975–986 (RNPRRAPPKPKP). The interval 1003-1012 (IRTVSDEDLE) is interaction with VP1 protein.

As to quaternary structure, homotrimer. A central divalent metal stabilizes the VP2 trimer. Interacts with host ITGA4/ITGB1. In terms of assembly, homodimer. Interacts (via C-terminus) with VP1 in the cytoplasm. Interacts with VP2. Post-translationally, specific enzymatic cleavages yield mature proteins. The capsid assembly seems to be regulated by polyprotein processing. The protease VP4 cleaves itself off the polyprotein, thus releasing pre-VP2 and VP3 within the infected cell. During capsid assembly, the C-terminus of pre-VP2 is further processed by VP4, giving rise to VP2, the external capsid protein and three small peptides that all stay closely associated with the capsid.

The protein resides in the virion. It localises to the host cytoplasm. In terms of biological role, capsid protein VP2 self assembles to form an icosahedral capsid with a T=13 symmetry, about 70 nm in diameter, and consisting of 260 VP2 trimers. The capsid encapsulates the genomic dsRNA. VP2 is also involved in attachment and entry into the host cell by interacting with host ITGA4/ITGB1. Functionally, the precursor of VP2 plays an important role in capsid assembly. First, pre-VP2 and VP2 oligomers assemble to form a procapsid. Then, the pre-VP2 intermediates may be processed into VP2 proteins by proteolytic cleavage mediated by VP4 to obtain the mature virion. The final capsid is composed of pentamers and hexamers but VP2 has a natural tendency to assemble into all-pentameric structures. Therefore pre-VP2 may be required to allow formation of the hexameric structures. Its function is as follows. Protease VP4 is a serine protease that cleaves the polyprotein into its final products. Pre-VP2 is first partially cleaved, and may be completely processed by VP4 upon capsid maturation. Capsid protein VP3 plays a key role in virion assembly by providing a scaffold for the capsid made of VP2. May self-assemble to form a T=4-like icosahedral inner-capsid composed of at least 180 trimers. Plays a role in genomic RNA packaging by recruiting VP1 into the capsid and interacting with the dsRNA genome segments to form a ribonucleoprotein complex. Additionally, the interaction of the VP3 C-terminal tail with VP1 removes the inherent structural blockade of the polymerase active site. Thus, VP3 can also function as a transcriptional activator. In terms of biological role, structural peptide 1 is a small peptide derived from pre-VP2 C-terminus. It destabilizes and perforates cell membranes, suggesting a role during entry. Functionally, structural peptide 2 is a small peptide derived from pVP2 C-terminus. It is not essential for the virus viability, but viral growth is affected when missing. Its function is as follows. Structural peptide 3 is a small peptide derived from pVP2 C-terminus. It is not essential for the virus viability, but viral growth is affected when missing. Structural peptide 4 is a small peptide derived from pVP2 C-terminus. It is essential for the virus viability. The sequence is that of Structural polyprotein from Gallus gallus (Chicken).